Reading from the N-terminus, the 682-residue chain is Two-component system protein A (682 aa).

The tract at residues 11 to 41 is disordered; the sequence is SLDDNDNGQQHQDEVQAKHQDQGHTCPSRPS. Positions 21-32 are enriched in basic and acidic residues; that stretch reads HQDEVQAKHQDQ. PAS domains lie at 45–105 and 166–239; these read LSRI…PILY and MNET…LREG. A PAC domain is found at 241 to 292; it reads IEDEGWRYRRDGSRFWANVLITPIYQFGQHVGFVKVTRDLTERKEAEACMIA. One can recognise a Histidine kinase domain in the interval 307–530; the sequence is NISHEIRTPM…VFWFTAKMGG (224 aa). The residue at position 310 (His310) is a Phosphohistidine; by autocatalysis. The Response regulatory domain maps to 563–680; it reads HVLLVEDNIV…QLLRVLWKWF (118 aa). 4-aspartylphosphate is present on Asp615.

In terms of processing, activation probably requires a transfer of a phosphate group between a His in the histidine kinase domain and an Asp of the response regulatory domain.

The protein localises to the cytoplasm. The catalysed reaction is ATP + protein L-histidine = ADP + protein N-phospho-L-histidine.. Its function is as follows. May be part of a two-component regulatory system required for formation of conidia on certain growth media. The chain is Two-component system protein A from Emericella nidulans (strain FGSC A4 / ATCC 38163 / CBS 112.46 / NRRL 194 / M139) (Aspergillus nidulans).